Here is an 88-residue protein sequence, read N- to C-terminus: Ribonuclease P protein component 1 (88 aa).

It belongs to the eukaryotic/archaeal RNase P protein component 1 family. As to quaternary structure, consists of a catalytic RNA component and at least 4-5 protein subunits.

The protein resides in the cytoplasm. The catalysed reaction is Endonucleolytic cleavage of RNA, removing 5'-extranucleotides from tRNA precursor.. Part of ribonuclease P, a protein complex that generates mature tRNA molecules by cleaving their 5'-ends. This Nitrosopumilus maritimus (strain SCM1) protein is Ribonuclease P protein component 1.